The following is a 607-amino-acid chain: CUB and zona pellucida-like domain-containing protein 1 (607 aa).

Positions 1-19 (MEVTGRLFIWAILAVSCRA) are cleaved as a signal peptide. At 20–568 (QLNSTAAEGR…AEISKQPLSH (549 aa)) the chain is on the lumenal side. Asn-22 carries N-linked (GlcNAc...) asparagine glycosylation. Cys-32 and Cys-58 form a disulfide bridge. 2 CUB domains span residues 32–146 (CTAS…YFFS) and 154–265 (CGGY…YAST). N-linked (GlcNAc...) asparagine glycosylation is present at Asn-67. 2 disulfides stabilise this stretch: Cys-85–Cys-107 and Cys-154–Cys-180. N-linked (GlcNAc...) asparagine glycosylation occurs at Asn-195. A disulfide bridge links Cys-207 with Cys-229. The ZP domain occupies 276-519 (SCASDKMRVI…SRCNQGCVSR (244 aa)). An N-linked (GlcNAc...) asparagine glycan is attached at Asn-419. Cys-442 and Cys-498 are joined by a disulfide. The helical transmembrane segment at 569–589 (LHLFSFMVLALNVVIVVTATV) threads the bilayer. Over 590-607 (RHFLNRWKDHGYQKLQVY) the chain is Cytoplasmic.

As to expression, expressed predominantly in epithelium of uterus and oviduct.

The protein resides in the zymogen granule membrane. In terms of biological role, localized to zymogen granules, where it functions in trypsinogen activation. May indirectly regulate cell motility, cell-cell and cell/extracellular matrix interactions. This chain is CUB and zona pellucida-like domain-containing protein 1, found in Rattus norvegicus (Rat).